Reading from the N-terminus, the 340-residue chain is Lipoate--protein ligase 2 (340 aa).

In terms of domain architecture, BPL/LPL catalytic spans 31-222; it reads FLDEDILFPY…QILGIDDIKE (192 aa). Residues Arg-73, 78-81, Lys-136, and Ala-140 contribute to the ATP site; that span reads GAVY. Lys-136 contributes to the (R)-lipoate binding site. A coiled-coil region spans residues 293-321; it reads QGDIKDVEEALQGTKMTREDLMHQLKQLD.

This sequence belongs to the LplA family.

The enzyme catalyses L-lysyl-[lipoyl-carrier protein] + (R)-lipoate + ATP = N(6)-[(R)-lipoyl]-L-lysyl-[lipoyl-carrier protein] + AMP + diphosphate + H(+). Its pathway is protein modification; protein lipoylation via exogenous pathway; protein N(6)-(lipoyl)lysine from lipoate: step 1/2. It functions in the pathway protein modification; protein lipoylation via exogenous pathway; protein N(6)-(lipoyl)lysine from lipoate: step 2/2. Its function is as follows. Catalyzes specifically the lipoylation of GcvH-L (SAV0324), likely via the ATP-dependent activation of lipoate to lipoyl-AMP and the transfer of the activated lipoyl onto the lipoyl domain of the target protein. Can also utilize lipoamide as substrate for GcvH-L modification. This chain is Lipoate--protein ligase 2, found in Staphylococcus aureus (strain Mu50 / ATCC 700699).